The chain runs to 160 residues: uncharacterized protein (160 aa).

It localises to the mitochondrion. This is an uncharacterized protein from Arabidopsis thaliana (Mouse-ear cress).